The chain runs to 207 residues: Non-structural protein 5 (207 aa).

Residues 2 to 69 (DPVSVVHSFA…CVLISNDLKE (68 aa)) form the DRBM domain.

This Banna virus (BAV) protein is Non-structural protein 5 (Segment-12).